Consider the following 417-residue polypeptide: Ribulose bisphosphate carboxylase large chain (417 aa).

Positions 103 and 153 each coordinate substrate. Lys155 serves as the catalytic Proton acceptor. Lys157 provides a ligand contact to substrate. Lys181, Asp183, and Glu184 together coordinate Mg(2+). Lys181 carries the post-translational modification N6-carboxylysine. His274 (proton acceptor) is an active-site residue. Substrate contacts are provided by Arg275, His307, and Ser359.

It belongs to the RuBisCO large chain family. Type I subfamily. As to quaternary structure, heterohexadecamer of 8 large chains and 8 small chains. The cofactor is Mg(2+).

It localises to the plastid. Its subcellular location is the chloroplast. The enzyme catalyses 2 (2R)-3-phosphoglycerate + 2 H(+) = D-ribulose 1,5-bisphosphate + CO2 + H2O. The catalysed reaction is D-ribulose 1,5-bisphosphate + O2 = 2-phosphoglycolate + (2R)-3-phosphoglycerate + 2 H(+). Functionally, ruBisCO catalyzes two reactions: the carboxylation of D-ribulose 1,5-bisphosphate, the primary event in carbon dioxide fixation, as well as the oxidative fragmentation of the pentose substrate in the photorespiration process. Both reactions occur simultaneously and in competition at the same active site. The protein is Ribulose bisphosphate carboxylase large chain of Acrostichum aureum (Golden leather fern).